Consider the following 605-residue polypeptide: Condensin-2 complex subunit H2 (605 aa).

At T19 the chain carries Phosphothreonine. Phosphoserine occurs at positions 95, 200, 208, 228, and 232. A disordered region spans residues 194-331; it reads LEPEGMSPME…PFDSLESKPF (138 aa). Acidic residues predominate over residues 256 to 266; it reads GEDEDAEEAVE. Phosphoserine occurs at positions 282, 284, 466, and 492.

The protein belongs to the CND2 H2 (condensin-2 subunit 2) family. Component of the condensin-2 complex, which contains the SMC2 and SMC4 heterodimer, and three non SMC subunits, NCAPG2, NCAPH2 and NCAPD3 that probably regulate the complex.

It is found in the nucleus. It localises to the chromosome. In terms of biological role, regulatory subunit of the condensin-2 complex, a complex that seems to provide chromosomes with an additional level of organization and rigidity and in establishing mitotic chromosome architecture. May promote the resolution of double-strand DNA catenanes (intertwines) between sister chromatids. Condensin-mediated compaction likely increases tension in catenated sister chromatids, providing directionality for type II topoisomerase-mediated strand exchanges toward chromatid decatenation. Required for decatenation of chromatin bridges at anaphase. Early in neurogenesis, may play an essential role to ensure accurate mitotic chromosome condensation in neuron stem cells, ultimately affecting neuron pool and cortex size. Seems to have lineage-specific role in T-cell development. The polypeptide is Condensin-2 complex subunit H2 (NCAPH2) (Homo sapiens (Human)).